Here is a 356-residue protein sequence, read N- to C-terminus: Replication factor C subunit 3 (356 aa).

K20 bears the N6-acetyllysine mark. S125 bears the Phosphoserine mark.

The protein belongs to the activator 1 small subunits family. In terms of assembly, subunit of the RFC complex, an heteropentameric complex consisting of a large subunit RFC1 and four small subunits RFC2, RFC3, RFC4 and RFC5; the RFC complex interacts with PCNA. Forms an heterotetrameric complex with RFC2, RFC4 and RFC5; this complex has ATPase activity but is not stimulated by PCNA. The heterotetramer of subunits RFC2, RFC3, RFC4 and RFC5 interacts with RAD17. Interacts with CNTD1; this interaction facilitates crossover formation.

It is found in the nucleus. Functionally, subunit of the replication factor C (RFC) complex which acts during elongation of primed DNA templates by DNA polymerases delta and epsilon, and is necessary for ATP-dependent loading of proliferating cell nuclear antigen (PCNA) onto primed DNA. The sequence is that of Replication factor C subunit 3 (RFC3) from Bos taurus (Bovine).